The chain runs to 124 residues: Protein MGF 110-4L (124 aa).

Positions 1-28 are cleaved as a signal peptide; it reads MLVIFLGILGLLANQVLGLPIQAGGHLC. A glycan (N-linked (GlcNAc...) asparagine; by host) is linked at asparagine 64. The Prevents secretion from ER motif lies at 121–124; sequence KEDL.

The protein belongs to the asfivirus MGF 110 family.

The protein localises to the virion. It is found in the host endoplasmic reticulum-Golgi intermediate compartment. Its function is as follows. Causes the redistribution of lumenal ER protein to an enlarged ERGIC compartment. The polypeptide is Protein MGF 110-4L (Ornithodoros (relapsing fever ticks)).